The sequence spans 258 residues: Peptidase inhibitor 15 (258 aa).

Residues 1 to 21 form the signal peptide; the sequence is MTIIAAISCVFLFSILCETSA. Residues 22 to 60 constitute a propeptide that is removed on maturation; it reads LVLPNSTDLLLSNNNFTDIETALAAHLDSAKIPKARRKR. N26, N36, and N124 each carry an N-linked (GlcNAc...) asparagine glycan. The SCP domain maps to 71 to 211; sequence LDYHNQVRGK…RRAVYLVCNY (141 aa).

It belongs to the CRISP family.

Its subcellular location is the secreted. Its function is as follows. Serine protease inhibitor which displays weak inhibitory activity against trypsin. May play a role in facial patterning during embryonic development. This Gallus gallus (Chicken) protein is Peptidase inhibitor 15 (PI15).